A 172-amino-acid chain; its full sequence is Large ribosomal subunit protein bL17 (172 aa).

Residues 127 to 172 (KAAKQDRAKRVKGSKKVTGDVAPAVAPVPSAPAETQEEAKAPESAE) form a disordered region. Residues 147 to 159 (VAPAVAPVPSAPA) show a composition bias toward low complexity. The segment covering 163 to 172 (EEAKAPESAE) has biased composition (basic and acidic residues).

It belongs to the bacterial ribosomal protein bL17 family. Part of the 50S ribosomal subunit. Contacts protein L32.

The sequence is that of Large ribosomal subunit protein bL17 from Chlorobium luteolum (strain DSM 273 / BCRC 81028 / 2530) (Pelodictyon luteolum).